The chain runs to 176 residues: Siroheme decarboxylase alpha subunit (176 aa).

Residues 1 to 24 form a disordered region; that stretch reads MTEAHNACCHPSGTAAGHHGAGKA. The span at 12–24 shows a compositional bias: low complexity; the sequence is SGTAAGHHGAGKA.

Belongs to the Ahb/Nir family. In terms of assembly, forms a heterodimer composed of AhbA and AhbB. Also forms heterotetramers.

The enzyme catalyses siroheme + 2 H(+) = 12,18-didecarboxysiroheme + 2 CO2. It participates in porphyrin-containing compound metabolism; protoheme biosynthesis. Functionally, involved in siroheme-dependent heme b biosynthesis. Catalyzes the decarboxylation of siroheme into didecarboxysiroheme. The protein is Siroheme decarboxylase alpha subunit of Nitratidesulfovibrio vulgaris (strain ATCC 29579 / DSM 644 / CCUG 34227 / NCIMB 8303 / VKM B-1760 / Hildenborough) (Desulfovibrio vulgaris).